Reading from the N-terminus, the 252-residue chain is MQRDEKLFELTLDTVLQRLNDLKLAVLSMIQKLELEYETINWPTFLDNFAIISSHLTGLTKILAKEQCPPLRNRTVLPLLVSMDRDDTLINITEGRVPVFSHDIVPDYLRTRPDPITEQKMLQNEQKAANLTNDAAMKQVTQYNKVVSHVLDMVSKAREEWEIESSSRTGIQQTSSMADTQLLVAAVGMGKGLKLTNYGPGPGMMVPPSIRAPSPMGGPAMSPGNVQQQLGKAPSAVKTNIKSANQVHPFSR.

The stretch at 117–142 (TEQKMLQNEQKAANLTNDAAMKQVTQ) forms a coiled coil. Low complexity predominate over residues 215–224 (PMGGPAMSPG). The segment at 215 to 252 (PMGGPAMSPGNVQQQLGKAPSAVKTNIKSANQVHPFSR) is disordered. Residues 237-252 (VKTNIKSANQVHPFSR) show a composition bias toward polar residues.

This sequence belongs to the Mediator complex subunit 8 family. In terms of assembly, component of the Mediator complex.

Its subcellular location is the nucleus. In terms of biological role, component of the Mediator complex, a coactivator involved in the regulated transcription of nearly all RNA polymerase II-dependent genes. Mediator functions as a bridge to convey information from gene-specific regulatory proteins to the basal RNA polymerase II transcription machinery. Mediator is recruited to promoters by direct interactions with regulatory proteins and serves as a scaffold for the assembly of a functional preinitiation complex with RNA polymerase II and the general transcription factors. Required for activated transcription of the MtnA and MtnB genes. This Drosophila melanogaster (Fruit fly) protein is Mediator of RNA polymerase II transcription subunit 8 (MED8).